Here is a 223-residue protein sequence, read N- to C-terminus: MGQKVNPNGIRLGYIRDWRSTWYADSSRYATKLNEDIKVREFLHKKLAAAAVSKIQIERPAQNAKITIHTARPGIVIGKKGDDVEKLRAEVHKLMGIPVQINIEEVRKPEIDAKLVAESVAQQLEKRVMFRRAMKKAMQAAMKSGAKGIKIMVSGRLGGAEIARSEWARDGRVPLQTFRADVDYATAEALTTYGVIGVKVWIYKGEILPGQIAEKKNNKKGAK.

Residues 39–107 (VREFLHKKLA…PVQINIEEVR (69 aa)) form the KH type-2 domain.

Belongs to the universal ribosomal protein uS3 family. In terms of assembly, part of the 30S ribosomal subunit. Forms a tight complex with proteins S10 and S14.

In terms of biological role, binds the lower part of the 30S subunit head. Binds mRNA in the 70S ribosome, positioning it for translation. The sequence is that of Small ribosomal subunit protein uS3 from Francisella tularensis subsp. mediasiatica (strain FSC147).